Consider the following 670-residue polypeptide: tRNA 5-methylaminomethyl-2-thiouridine biosynthesis bifunctional protein MnmC (670 aa).

Positions 1–242 (MTFSVQHAEI…KRECLSGLKI (242 aa)) are tRNA (mnm(5)s(2)U34)-methyltransferase. The segment at 269–670 (IGGGIASLCA…KKWLKGSKVE (402 aa)) is FAD-dependent cmnm(5)s(2)U34 oxidoreductase.

The protein in the N-terminal section; belongs to the methyltransferase superfamily. tRNA (mnm(5)s(2)U34)-methyltransferase family. In the C-terminal section; belongs to the DAO family. Requires FAD as cofactor.

It localises to the cytoplasm. It catalyses the reaction 5-aminomethyl-2-thiouridine(34) in tRNA + S-adenosyl-L-methionine = 5-methylaminomethyl-2-thiouridine(34) in tRNA + S-adenosyl-L-homocysteine + H(+). Its function is as follows. Catalyzes the last two steps in the biosynthesis of 5-methylaminomethyl-2-thiouridine (mnm(5)s(2)U) at the wobble position (U34) in tRNA. Catalyzes the FAD-dependent demodification of cmnm(5)s(2)U34 to nm(5)s(2)U34, followed by the transfer of a methyl group from S-adenosyl-L-methionine to nm(5)s(2)U34, to form mnm(5)s(2)U34. This is tRNA 5-methylaminomethyl-2-thiouridine biosynthesis bifunctional protein MnmC from Haemophilus influenzae (strain PittEE).